The sequence spans 328 residues: uncharacterized protein (328 aa).

Residues 296-328 (APEGDLEDEIIEVDPEQPRDDPYRRLRTPPPGG) are disordered. A compositionally biased stretch (acidic residues) spans 299 to 310 (GDLEDEIIEVDP).

Possibly necessary for replication. This is an uncharacterized protein from Halobacterium sp. (strain GN101).